The primary structure comprises 192 residues: Probable nicotinate-nucleotide adenylyltransferase (192 aa).

The protein belongs to the NadD family.

It carries out the reaction nicotinate beta-D-ribonucleotide + ATP + H(+) = deamido-NAD(+) + diphosphate. It participates in cofactor biosynthesis; NAD(+) biosynthesis; deamido-NAD(+) from nicotinate D-ribonucleotide: step 1/1. Its function is as follows. Catalyzes the reversible adenylation of nicotinate mononucleotide (NaMN) to nicotinic acid adenine dinucleotide (NaAD). This is Probable nicotinate-nucleotide adenylyltransferase from Shouchella clausii (strain KSM-K16) (Alkalihalobacillus clausii).